Reading from the N-terminus, the 392-residue chain is Probable myosin light chain kinase DDB_G0271550 (392 aa).

The 259-residue stretch at 20 to 278 (YEFGPEIGRG…ASQCIKHPWL (259 aa)) folds into the Protein kinase domain. ATP is bound by residues 26 to 34 (IGRGAFSIV) and lysine 49. Aspartate 142 serves as the catalytic Proton acceptor. A compositionally biased stretch (polar residues) spans 317 to 326 (SQSTPNLHSA). Residues 317–392 (SQSTPNLHSA…NNNNNNNNNI (76 aa)) are disordered. Low complexity predominate over residues 327-392 (NSNTNTNSLS…NNNNNNNNNI (66 aa)).

The protein belongs to the protein kinase superfamily. CAMK Ser/Thr protein kinase family. CaMK subfamily.

The enzyme catalyses L-seryl-[myosin light chain] + ATP = O-phospho-L-seryl-[myosin light chain] + ADP + H(+). It carries out the reaction L-threonyl-[myosin light chain] + ATP = O-phospho-L-threonyl-[myosin light chain] + ADP + H(+). May phosphorylate a specific serine in the N-terminus of a myosin light chain. The sequence is that of Probable myosin light chain kinase DDB_G0271550 from Dictyostelium discoideum (Social amoeba).